The following is a 273-amino-acid chain: E3 ubiquitin-protein ligase SDIR1 (273 aa).

The Cytoplasmic segment spans residues 1-33 (MSFVFRGSRGDLESGFSGGFLPERRAMRVHGAR). The helical transmembrane segment at 34-54 (PVNSNSLAFLVTVLLLFMILN) threads the bilayer. Residues 55 to 56 (SH) are Lumenal-facing. The helical transmembrane segment at 57 to 77 (QMPPNFLLWLVLGVFLMATTL) threads the bilayer. The Cytoplasmic segment spans residues 78 to 273 (RMYATCQQLQ…EIDDDASDMV (196 aa)). The RING-type; atypical zinc-finger motif lies at 211-252 (CSVCLEQVTVGEIVRTLPCLHQFHAGCIDPWLRQQGTCPVCK).

In terms of assembly, interacts with ATP1/SDIRIP1. As to expression, ubiquitous.

The protein localises to the endoplasmic reticulum membrane. It carries out the reaction S-ubiquitinyl-[E2 ubiquitin-conjugating enzyme]-L-cysteine + [acceptor protein]-L-lysine = [E2 ubiquitin-conjugating enzyme]-L-cysteine + N(6)-ubiquitinyl-[acceptor protein]-L-lysine.. E3 ubiquitin-protein ligase that acts as a positive regulator of abscisic acid-related stress signal transduction. Interacts with and ubiquitinates ATP1/SDIRIP1 to modulate ATP1/SDIRIP1 stability through the 26S proteasome pathway. Regulates abscisic acid (ABA) and salt stress responses by negatively affecting ATP1/SDIRIP1 stability. The SDIR1-ATP1/SDIRIP1 complex plays an important role in ABA signaling through the ubiquitination pathway. This is E3 ubiquitin-protein ligase SDIR1 from Arabidopsis thaliana (Mouse-ear cress).